We begin with the raw amino-acid sequence, 204 residues long: Large ribosomal subunit protein bL25 (204 aa).

A Phosphoserine modification is found at Ser-123.

Belongs to the bacterial ribosomal protein bL25 family. CTC subfamily. Part of the 50S ribosomal subunit; part of the 5S rRNA/L5/L18/L25 subcomplex. Contacts the 5S rRNA. Binds to the 5S rRNA independently of L5 and L18.

Functionally, this is one of the proteins that binds to the 5S RNA in the ribosome where it forms part of the central protuberance. This is Large ribosomal subunit protein bL25 from Pseudomonas aeruginosa (strain UCBPP-PA14).